Reading from the N-terminus, the 1213-residue chain is A disintegrin and metalloproteinase with thrombospondin motifs 2 (1213 aa).

The N-terminal stretch at 1–28 (MDPPAGAARRLLCPALLLLLLPPPPLLL) is a signal peptide. A propeptide spanning residues 29 to 260 (LPPPPASVRL…INSSRRRVRR (232 aa)) is cleaved from the precursor. A glycan (N-linked (GlcNAc...) asparagine) is linked at N111. Positions 211 to 232 (YRRPPTPKPPPVSEPQALDTGV) are disordered. Residues 214-223 (PPTPKPPPVS) show a composition bias toward pro residues. N252 carries N-linked (GlcNAc...) asparagine glycosylation. One can recognise a Peptidase M12B domain in the interval 267–471 (YNIEVLLGVD…HSYDCLRDDP (205 aa)). 10 cysteine pairs are disulfide-bonded: C344–C393, C387–C466, C426–C452, C493–C518, C504–C527, C513–C546, C540–C551, C574–C611, C578–C616, and C589–C601. H409 provides a ligand contact to Zn(2+). E410 is a catalytic residue. Residues H413 and H419 each contribute to the Zn(2+) site. The 81-residue stretch at 480–560 (PQLPGLHYSM…CIWLTPDILK (81 aa)) folds into the Disintegrin domain. The TSP type-1 1 domain occupies 561–617 (RDGNWGAWTPFGSCSRTCGTGVKFRTRQCDNPHPANGGRTCSGLAYDFQLCNPQDCP). The short motif at 692–694 (RGD) is the Cell attachment site element. A spacer region spans residues 723-851 (CKVVKGTFTR…LNVDDNNVLE (129 aa)). TSP type-1 domains follow at residues 855 to 913 (VRHE…NPQE), 915 to 975 (SQPV…NREL), and 976 to 1030 (CPGR…APCP). Residues N949, N950, and N994 are each glycosylated (N-linked (GlcNAc...) asparagine). Intrachain disulfides connect C988–C1024, C992–C1029, and C1003–C1013. A glycan (N-linked (GlcNAc...) asparagine) is linked at N1032. The region spanning 1060 to 1098 (SKDQCQGDKSMFCRMEVLSRYCSIPSYNKLCCKSCNPPR) is the PLAC domain. 3 N-linked (GlcNAc...) asparagine glycosylation sites follow: N1099, N1147, and N1152.

May belong to a multimeric complex. Binds specifically to collagen type XIV. It depends on Zn(2+) as a cofactor. Post-translationally, the precursor is cleaved by a furin endopeptidase. Glycosylated. Can be O-fucosylated by POFUT2 on a serine or a threonine residue found within the consensus sequence C1-X(2)-(S/T)-C2-G of the TSP type-1 repeat domains where C1 and C2 are the first and second cysteine residue of the repeat, respectively. Fucosylated repeats can then be further glycosylated by the addition of a beta-1,3-glucose residue by the glucosyltransferase, B3GALTL. Fucosylation mediates the efficient secretion of ADAMTS family members. Can also be C-glycosylated with one or two mannose molecules on tryptophan residues within the consensus sequence W-X-X-W of the TPRs, and N-glycosylated. These other glycosylations can also facilitate secretion.

The protein localises to the secreted. It is found in the extracellular space. Its subcellular location is the extracellular matrix. It carries out the reaction Cleaves the N-propeptide of collagen chain alpha1(I) at Pro-|-Gln and of alpha1(II) and alpha2(I) at Ala-|-Gln.. In terms of biological role, cleaves the propeptides of type I and II collagen prior to fibril assembly. Does not act on type III collagen. Cleaves lysyl oxidase LOX at a site downstream of its propeptide cleavage site to produce a short LOX form with reduced collagen-binding activity. The chain is A disintegrin and metalloproteinase with thrombospondin motifs 2 (Adamts2) from Mus musculus (Mouse).